Consider the following 498-residue polypeptide: Probable cytosol aminopeptidase (498 aa).

Lys269 and Asp274 together coordinate Mn(2+). The active site involves Lys281. Asp292, Asp351, and Glu353 together coordinate Mn(2+). Residue Arg355 is part of the active site.

The protein belongs to the peptidase M17 family. Mn(2+) serves as cofactor.

The protein localises to the cytoplasm. It carries out the reaction Release of an N-terminal amino acid, Xaa-|-Yaa-, in which Xaa is preferably Leu, but may be other amino acids including Pro although not Arg or Lys, and Yaa may be Pro. Amino acid amides and methyl esters are also readily hydrolyzed, but rates on arylamides are exceedingly low.. The catalysed reaction is Release of an N-terminal amino acid, preferentially leucine, but not glutamic or aspartic acids.. Functionally, presumably involved in the processing and regular turnover of intracellular proteins. Catalyzes the removal of unsubstituted N-terminal amino acids from various peptides. The polypeptide is Probable cytosol aminopeptidase (Glaesserella parasuis serovar 5 (strain SH0165) (Haemophilus parasuis)).